Reading from the N-terminus, the 436-residue chain is 3-ketoacyl-CoA thiolase (436 aa).

Catalysis depends on Cys99, which acts as the Acyl-thioester intermediate. Active-site proton acceptor residues include His392 and Cys422.

This sequence belongs to the thiolase-like superfamily. Thiolase family. In terms of assembly, heterotetramer of two alpha chains (FadJ) and two beta chains (FadI).

It is found in the cytoplasm. It carries out the reaction an acyl-CoA + acetyl-CoA = a 3-oxoacyl-CoA + CoA. Its pathway is lipid metabolism; fatty acid beta-oxidation. Functionally, catalyzes the final step of fatty acid oxidation in which acetyl-CoA is released and the CoA ester of a fatty acid two carbons shorter is formed. The polypeptide is 3-ketoacyl-CoA thiolase (Shigella flexneri).